We begin with the raw amino-acid sequence, 148 residues long: MIKEELNLWAEGVEFKHWDAYYNFILSVLDFLCIKEYELSVILCNNEYIQKLNSQFRQKSEPTDVLSFNYLEESGQIDHKIQGDLIISLEYLEFSSLEFNVELYDELQRNTIHGILHLIGYTHKTNDFQNEEMLIIQEKVLRETRRVF.

Positions 113, 117, and 123 each coordinate Zn(2+).

Belongs to the endoribonuclease YbeY family. Zn(2+) serves as cofactor.

The protein resides in the cytoplasm. In terms of biological role, single strand-specific metallo-endoribonuclease involved in late-stage 70S ribosome quality control and in maturation of the 3' terminus of the 16S rRNA. The polypeptide is Endoribonuclease YbeY (Borrelia turicatae (strain 91E135)).